The sequence spans 333 residues: Foldase protein PrsA (333 aa).

The first 22 residues, 1-22 (MKKSTKLLAGIVTLASAMTLAA), serve as a signal peptide directing secretion. Cys-23 carries the N-palmitoyl cysteine lipid modification. A lipid anchor (S-diacylglycerol cysteine) is attached at Cys-23. Residues 145-240 (TPEMTTQVTT…NKFYIVKVTK (96 aa)) enclose the PpiC domain. The tract at residues 301–333 (DKKASKANTSKSDQKSSSDSSKDSQSSKSKSEK) is disordered. Basic and acidic residues predominate over residues 312-322 (SDQKSSSDSSK). The span at 323 to 333 (DSQSSKSKSEK) shows a compositional bias: low complexity.

This sequence belongs to the PrsA family.

It localises to the cell membrane. It carries out the reaction [protein]-peptidylproline (omega=180) = [protein]-peptidylproline (omega=0). In terms of biological role, plays a major role in protein secretion by helping the post-translocational extracellular folding of several secreted proteins. The sequence is that of Foldase protein PrsA from Streptococcus equi subsp. equi (strain 4047).